The primary structure comprises 1607 residues: MSYEEDDWFSYRTEFNKRADSPRAAGNYDFESGNIDNIPLNDDGPLSPSQDFDLAGTLEEYESYDLRLSPNGGLNREDQQPGPSGNNDGQYHVMQNNDSFAQHMQSSNTIEYNSFEMPTVINSNHDVGPYQDLGIDDPNSFYANQQPSTSQGNDMIINENYEMMGPSTSYMPQIDHMNPSGNSSSQINHQQGMIVPQVQQQPAKPKTTKKRPPPKKKTAAQAPDTVGTVLTKVNKLTQQIDNNNDNQEQKIETRISAEDLVRVSALLSRLDVYQKEQAQGNNTHDQDIEALQAEIAQVFTKNMAMSANDAPGNSILSQIQNLTSIGSSASSSAQPSQPAKKAAPKRKTVPNTAKNLAQNQQIMPPQAQITPTKLVMDPPTTTMVPSSSQSNHMYSNDGFTTYNQMDEPGTSQQQQYNDYRQPPSQESMQYGHQQIIQARVVPSMNQKTHNYRQAVVFASPNTNGPSSQLQRPQSGMDQMQDQQYHAQDLQGSQVQQTFVSVQHDGQIYQEVEPTLRDFVRQGRYQGPQDAPHLRQQLITNVNATTNKQMVHRSQDPTPSPGNLQQFGEPLQRHGSYPHSHDMRPNSHSQSQHSYSNHYDGATEFFDVSMQHQDSQMSQIQPGSQHYVQQQELYHPIGDQQQMVEPESEYPVPQVTNELSEEELRAIMEEKRQIRQKRLKDIMIDQLNRLEEPVDVTPFRNKMDVLERLLPYHHFANEEEPVSDFDSTFQRVMDNAVHQANSIGNRIRNIVLRDTMRSSTEWEENMILFLETESERRKLEDDKKLADQDLSTFLRNSDIIQNVRARRLDVERTRLRVPRIPAHLKELDLQNGQLSSLYREYEFDSYDENRPRGSPFVYEEPESESESEPEAEPEPKKDNFAEPEPARGDISPLIGFPQLSPIPSPSRYRNESESTFDWKDEDESPLLSPETEKINKAADQFRKEIFGTQEDLDKSEPFPFEQISEAARNQHLITAQPQLPRVDASSIGSLASSSSTVDHSPQSIHPVFSPKAAIQSSSVQVMKPPRSPSSVSCKLSTPCVEQSLPEESHYEGSPEIDEDYDMSPIRENEPAELISLPISVNMIKKEKEDSTPKLKLRIPAAVLQNGIVASEDESDVAVEETIPAIRKPLKLRFNLKDIKLEEPSPDRDVASSRPKSRTEPPPTPEKLHVKIKASPAETTPTKLQLKEKSPAKTPVFKTPLQTPIKMTPSPSESRKRRSAKIEDSPAQKKKLLNSGSSFVTPKNGLRAELDETVERPLRIMTDGRKIVMKISKVSRNINHFVTPRRDKKGNLHKDLSPTNYTRLTMKLMKKKGELSVEFTETPNKNSEEDDHKIPNIPSTSTSIPPASTVVSSVSVKGRPAPASRKSSIDTAGKDKKGQLAKNKAAFCNRFNPFANVPSSKPSTSSAVSATPSTSSAVSAKLPTGKTPGRPVALSTPRSSHKPPQAVVAPRPNLIRTAPVVPKITVTNASESSLPSKSHIPIEVKPKLSSLLPWVSDTDESPEQKHKLKKTMPSINLLKVKTEPPEADAVTSKPESPRASSSMSFFEDAFLRSPKRSNEPLPVVEFSDDEENDLAHSTFSHATDHLLGTSNMNSSTNGSSSGLPWSTDP.

Disordered stretches follow at residues 14–52, 67–93, 167–222, 326–425, 459–478, 549–594, 845–931, 1017–1061, 1141–1241, 1319–1378, 1392–1445, and 1517–1607; these read EFNKRADSPRAAGNYDFESGNIDNIPLNDDGPLSPSQDF, RLSPNGGLNREDQQPGPSGNNDGQYHV, STSY…AAQA, GSSA…PPSQ, SPNTNGPSSQLQRPQSGMDQ, MVHR…QHSY, YDEN…PETE, SVQV…DYDM, EPSP…VTPK, ETPN…KGQL, FANV…PQAV, and KVKT…STDP. 2 stretches are compositionally biased toward polar residues: residues 81 to 93 and 179 to 191; these read PGPSGNNDGQYHV and PSGNSSSQINHQQ. The segment covering 195–205 has biased composition (low complexity); it reads VPQVQQQPAKP. Positions 206-218 are enriched in basic residues; that stretch reads KTTKKRPPPKKKT. Low complexity predominate over residues 327–341; that stretch reads SSASSSAQPSQPAKK. Composition is skewed to polar residues over residues 349–371 and 379–425; these read VPNTAKNLAQNQQIMPPQAQITP and PTTT…PPSQ. Residues 585–594 show a composition bias toward low complexity; sequence NSHSQSQHSY. Acidic residues predominate over residues 858-871; sequence EEPESESESEPEAE. Composition is skewed to basic and acidic residues over residues 872–886 and 907–917; these read PEPKKDNFAEPEPAR and YRNESESTFDW. Low complexity-rich tracts occupy residues 1333-1354, 1395-1419, and 1584-1601; these read PNIPSTSTSIPPASTVVSSVSV, VPSSKPSTSSAVSATPSTSSAVSAK, and LLGTSNMNSSTNGSSSGL.

Expressed in gonad distal tip cells and gonad sheath cells.

The protein localises to the nucleus. The protein resides in the cytoplasm. In terms of biological role, during gonad development, involved in distal tip cell (DTC) migration from the dorsal side of the hermaphrodite body to the midbody which allows for the formation of gonad arms. Role in gonad DTC migration may be in association with integrin related proteins ina-1 and mig-15. This chain is Abnormal cell migration protein 38, found in Caenorhabditis elegans.